An 87-amino-acid chain; its full sequence is Neutrophil antibiotic peptide NP-3A (87 aa).

The first 19 residues, 1–19, serve as a signal peptide directing secretion; that stretch reads MRTLTLLTTLLLLALHTQA. Residues 20–58 constitute a propeptide that is removed on maturation; it reads ESPQGSTKEAPDEEQDISVFFGGDKGTALQDAAVKAGVT. Cystine bridges form between C59–C87, C61–C76, and C66–C86.

This sequence belongs to the alpha-defensin family. In terms of tissue distribution, highest expression in bone marrow and to a much lesser extent in small intestine.

It is found in the secreted. Active in vitro against S.aureus, fungi, Gram-positive and Gram-negative bacteria and to a lesser extent against an enveloped virus. This Rattus norvegicus (Rat) protein is Neutrophil antibiotic peptide NP-3A.